The sequence spans 212 residues: Large ribosomal subunit protein uL3 (212 aa).

The disordered stretch occupies residues 119–146; sequence YQGNIKRWGQSRGPETHGSRYHRIPGSM.

This sequence belongs to the universal ribosomal protein uL3 family. In terms of assembly, part of the 50S ribosomal subunit. Forms a cluster with proteins L14 and L19.

Functionally, one of the primary rRNA binding proteins, it binds directly near the 3'-end of the 23S rRNA, where it nucleates assembly of the 50S subunit. This Lactobacillus helveticus (strain DPC 4571) protein is Large ribosomal subunit protein uL3.